The primary structure comprises 2003 residues: MRHQVKVCILELREIMREIHNYYYFLDSWTKLNSVGSLIHLFFRQERFFKLFDTRIFSILLSRNLQGSPSNRYFTIKGVILFVAGVLIYRINNQNMVERKSLHLTGLFPIPMNSTEPIKDRLEEAIGSSNINRLSILLLYFPKGKNISERYFLNPKETTGVITITKKGSMPESNWNSGPSFKILVTDFIAYLTSAFREKIPKNPMINLMFPGEMEDFIGNPTRSVRPFCSDRWSELHLWTNPTEKSTIDHKFVKNPLSFVRGAENKEIMNLLRIITYLQKTFSIHSISSDPRWDSVPKHDPDMDSFQKNSLFFLFHRFHERNRFESEERLQEMTELFTLLISEPDLVYHKGFSFSIYIDSYGLEKKKLLNEARAESKNKSLWVLSPILFRYEEIEYFFQRIIQKRVRWISCGNGLADLKQKMVVFASKNIMEAVNQSRLIQNMIQIKSSTDDGYIRNLFNRFFLLKKYDRNFEYRMQGDQKGTPIFNQRTLMKCRIKQDHTYLYKWSDGTQSLQEHLEHFLSEQKSGFKVQKRYFQVMFDQLRICMTKNLIHWFEVRKKVEKKVGKNVYKLVILLLSKSLRFFFLPQSLHFFFIKLLRFVTKFILFLSNSLTIFCVSFGNTPIQRSEIYISELKCSNKKLCNQLFESIGFQIVHLKKLKPLLLEEYDTYNFVINGGTRSPFLSNKIPKRIFDSLSTRTNHSKSFDKKDSCLSKIFHDKDNWLNPPKPFHTSSLISSFYKANKLRFRSHLHHFLFYCNKRFPFSVEKARNTNSHYIYGQFLNILLFRKKRFSLCVGEKKHVFWSRATISPIESQVSNIFIPKDFIQSDDKEYNLDKYFNFLSQPDTVIRRAIYSIVETSGTPLTETQKGDLERTYCQPLSDINLYDSEVNNFPEYLNLNSNMGLAHILFSDKYLSSENHSLCLKKGADVHKGRMSTTFQRDSSFSILSEKWNLFQTYLPSFFTSTGYKYLTLIFGDNFSDLLLILSRRVSIFQEILGLSWRILQIRLSKMPLFIRSEISSQWLHNILLSKEKIRRNTKSSLISTHLRSTKFWEFFYSIIFLLLVAGYLGPIYIFFVSRAFSELQTELKSLKSLRIPSSTIELRKLLDKYPRSEPNSFWLKNIFLVVMEQLRDSLEEIKGFAFGLNRVGPTSGVNSIRFKNKYFNINGIDIIDLIPFAHTRIAFSINTRHISHTSKEIYSLIRKRKNVNGVWIDDKLESWVANSDSIHEEERKFLVQLSALTTEKRILLSLTHSDHFSKNDSGYQMIEQPGAIYLRYLVDIHQKHLMNYEFNTSCLAERRIFLAHSQTITYSQTSYGTNSFHFPSHGKPFSLRLALSPSRGILVIGSIGTGRSYLVKYLATNSYVPFITVFPNKFLDKNPQFIDDIDIDNSNNIDASDDIDMDNSDNIDDDIDRDLATELELLTWMNALTMDREMKAEIARLFITLQFELARAMSPCIIWIPNIHDLDVNESNYLSLGLLVNHLSRDCERCSPINILVIASTHIPQKVDPALIAPKKLNTCIKLRRLLIPQQRKYFFTLSYTRGFHLENKMFHTNGFGSITMGPNARDIVALTNEVLSISITQKKSIIDTNTIRSALHRQTWDLQSQVRLVQDHEILFYQIGRAVAQNVLISNLSNCPIDPISIYLKNKSCNEGDSYLYKWYFELGTSMKKLTILLYLLSCTAGSVAQDLWSLPGPDEKNGITSYGLVENDSDLVHGLLEVEGALVGSSRTEKNCSKFENDRVTLLLRPEPRNPLERMQNGSCSILDQRFLSEKYESEFEEGALAPQQIEEDLFNHIVWAPTIWRPWGFLCIERPNELGFSYWSRSFRGKRILYDEEDELEENDSEFLQSGTMQYKTRDRSSKEKGLFRISQFIWDPADPLFFLFKDRPPGSVFSRLELFADEEMSKGLLTSQTSQIEHLFRYKYTRWFINKTQEKHFEFLIHRQRCLRTNSSLSNRSFRSNTLSESYQYLSNLFLSNGTLLDQMTKTLLRKRWLFPDEMKIGFM.

ATP is bound at residue 1344-1351; the sequence is GSIGTGRS.

This sequence belongs to the Ycf2 family.

Its subcellular location is the plastid stroma. Probable ATPase of unknown function. Its presence in a non-photosynthetic plant (Epifagus virginiana) and experiments in tobacco indicate that it has an essential function which is probably not related to photosynthesis. The chain is Protein Ycf2 (ycf2) from Cuscuta reflexa (Southern Asian dodder).